The chain runs to 177 residues: Large ribosomal subunit protein uL10 (177 aa).

This sequence belongs to the universal ribosomal protein uL10 family. In terms of assembly, part of the ribosomal stalk of the 50S ribosomal subunit. The N-terminus interacts with L11 and the large rRNA to form the base of the stalk. The C-terminus forms an elongated spine to which L12 dimers bind in a sequential fashion forming a multimeric L10(L12)X complex.

In terms of biological role, forms part of the ribosomal stalk, playing a central role in the interaction of the ribosome with GTP-bound translation factors. This chain is Large ribosomal subunit protein uL10, found in Thermoanaerobacter pseudethanolicus (strain ATCC 33223 / 39E) (Clostridium thermohydrosulfuricum).